The chain runs to 434 residues: UDP-N-acetylglucosamine 1-carboxyvinyltransferase 1 (434 aa).

22–23 contacts phosphoenolpyruvate; it reads KN. Arg93 provides a ligand contact to UDP-N-acetyl-alpha-D-glucosamine. The Proton donor role is filled by Cys117. Cys117 is modified (2-(S-cysteinyl)pyruvic acid O-phosphothioketal). UDP-N-acetyl-alpha-D-glucosamine-binding positions include 122 to 126, Asp306, and Val328; that span reads RPIDQ.

This sequence belongs to the EPSP synthase family. MurA subfamily.

The protein resides in the cytoplasm. The catalysed reaction is phosphoenolpyruvate + UDP-N-acetyl-alpha-D-glucosamine = UDP-N-acetyl-3-O-(1-carboxyvinyl)-alpha-D-glucosamine + phosphate. Its pathway is cell wall biogenesis; peptidoglycan biosynthesis. In terms of biological role, cell wall formation. Adds enolpyruvyl to UDP-N-acetylglucosamine. The chain is UDP-N-acetylglucosamine 1-carboxyvinyltransferase 1 from Bacillus cereus (strain ATCC 14579 / DSM 31 / CCUG 7414 / JCM 2152 / NBRC 15305 / NCIMB 9373 / NCTC 2599 / NRRL B-3711).